The sequence spans 318 residues: 2-desacetyl-2-hydroxyethyl bacteriochlorophyllide A dehydrogenase (318 aa).

It participates in porphyrin-containing compound metabolism; bacteriochlorophyll biosynthesis (light-independent). Its function is as follows. This protein catalyzes the penultimate step in bacteriochlorophyll a biosynthesis. The sequence is that of 2-desacetyl-2-hydroxyethyl bacteriochlorophyllide A dehydrogenase (bchC) from Cereibacter sphaeroides (strain ATCC 17023 / DSM 158 / JCM 6121 / CCUG 31486 / LMG 2827 / NBRC 12203 / NCIMB 8253 / ATH 2.4.1.) (Rhodobacter sphaeroides).